The sequence spans 382 residues: Putative oxidoreductase C1F5.03c (382 aa).

Residues 7-27 traverse the membrane as a helical segment; sequence IVIVGGGITGVSCLYFLAHHP.

The protein belongs to the TDA3 family.

The protein localises to the cytoplasm. The protein resides in the membrane. Its function is as follows. Putative oxidoreductase that negatively regulates the retrieval of cargo from late endosomes to the Golgi. The protein is Putative oxidoreductase C1F5.03c of Schizosaccharomyces pombe (strain 972 / ATCC 24843) (Fission yeast).